The primary structure comprises 200 residues: Prostamide/prostaglandin F synthase (200 aa).

This sequence belongs to the peroxiredoxin-like PRXL2 family. Prostamide/prostaglandin F synthase subfamily.

The protein localises to the cytoplasm. Its subcellular location is the cytosol. It carries out the reaction prostaglandin H2 + [thioredoxin]-dithiol = prostaglandin F2alpha + [thioredoxin]-disulfide. It catalyses the reaction prostamide F2alpha + [thioredoxin]-disulfide = prostamide H2 + [thioredoxin]-dithiol. Its function is as follows. Catalyzes the reduction of prostaglandin-ethanolamide H(2) (prostamide H(2)) to prostamide F(2alpha) with NADPH as proton donor. Also able to reduce prostaglandin H(2) to prostaglandin F(2alpha). This is Prostamide/prostaglandin F synthase (prxl2b) from Salmo salar (Atlantic salmon).